Here is a 240-residue protein sequence, read N- to C-terminus: Probable transcriptional regulatory protein jhp_0149 (240 aa).

Belongs to the TACO1 family.

It is found in the cytoplasm. This is Probable transcriptional regulatory protein jhp_0149 from Helicobacter pylori (strain J99 / ATCC 700824) (Campylobacter pylori J99).